The following is a 158-amino-acid chain: Small ribosomal subunit protein uS13 (158 aa).

The protein belongs to the universal ribosomal protein uS13 family. In terms of assembly, part of the 30S ribosomal subunit. Forms a loose heterodimer with protein S19. Forms two bridges to the 50S subunit in the 70S ribosome.

In terms of biological role, located at the top of the head of the 30S subunit, it contacts several helices of the 16S rRNA. In the 70S ribosome it contacts the 23S rRNA (bridge B1a) and protein L5 of the 50S subunit (bridge B1b), connecting the 2 subunits; these bridges are implicated in subunit movement. This chain is Small ribosomal subunit protein uS13, found in Picrophilus torridus (strain ATCC 700027 / DSM 9790 / JCM 10055 / NBRC 100828 / KAW 2/3).